The following is a 443-amino-acid chain: Protein IQ-DOMAIN 11 (443 aa).

The segment at 5–20 (KGLFTVLKRIFISEVN) is calmodulin-binding. 2 short sequence motifs (nuclear localization signal) span residues 11-18 (LKRIFISE) and 27-34 (RRKWTFWK). Positions 44–65 (ITAPPEHRTSHESHEEQKEEIV) are disordered. A compositionally biased stretch (basic and acidic residues) spans 48–64 (PEHRTSHESHEEQKEEI). 2 consecutive IQ domains span residues 113–138 (AATR…GIVK) and 139–161 (LQAY…CLQS). Positions 277-293 (FSSKTKPKDETLNEKQL) are enriched in basic and acidic residues. A disordered region spans residues 277 to 361 (FSSKTKPKDE…PRSFDTQSES (85 aa)).

Belongs to the IQD family. Binds to multiple calmodulin (CaM) in the presence of Ca(2+) and CaM-like proteins. In terms of tissue distribution, expressed in hypocotyls, cotyledons, leaves and petioles.

It localises to the nucleus. The protein resides in the cytoplasm. The protein localises to the cytoskeleton. Functionally, may be involved in cooperative interactions with calmodulins or calmodulin-like proteins. Recruits calmodulin proteins to microtubules, thus being a potential scaffold in cellular signaling and trafficking. Regulates cell shape and elongation in aerial organs (i.e. epidermis pavement cells) probably by regulating cortical microtubules (MT) arrays orientation. May associate with nucleic acids and regulate gene expression at the transcriptional or post-transcriptional level. This Arabidopsis thaliana (Mouse-ear cress) protein is Protein IQ-DOMAIN 11.